We begin with the raw amino-acid sequence, 479 residues long: Altronate oxidoreductase (479 aa).

Residue 18–29 coordinates NAD(+); sequence IIQFGEGNFLRA.

The protein belongs to the mannitol dehydrogenase family. UxaB subfamily.

The catalysed reaction is D-altronate + NAD(+) = keto-D-tagaturonate + NADH + H(+). It functions in the pathway carbohydrate metabolism; pentose and glucuronate interconversion. This is Altronate oxidoreductase from Bacteroides thetaiotaomicron (strain ATCC 29148 / DSM 2079 / JCM 5827 / CCUG 10774 / NCTC 10582 / VPI-5482 / E50).